The following is a 144-amino-acid chain: Globin-1 (144 aa).

Residues 1–141 enclose the Globin domain; sequence VSANDIKNVQ…ILHQMSSYFA (141 aa). His89 contributes to the heme b binding site.

The protein belongs to the globin family. As to quaternary structure, homodimer.

This chain is Globin-1, found in Phreagena soyoae (Deep-sea cold-seep clam).